A 93-amino-acid polypeptide reads, in one-letter code: CRISPR-associated endoribonuclease Cas2 (93 aa).

Asp13 serves as a coordination point for Mg(2+).

The protein belongs to the CRISPR-associated endoribonuclease Cas2 protein family. As to quaternary structure, homodimer, forms a heterotetramer with a Cas1 homodimer. Requires Mg(2+) as cofactor.

Its function is as follows. CRISPR (clustered regularly interspaced short palindromic repeat), is an adaptive immune system that provides protection against mobile genetic elements (viruses, transposable elements and conjugative plasmids). CRISPR clusters contain sequences complementary to antecedent mobile elements and target invading nucleic acids. CRISPR clusters are transcribed and processed into CRISPR RNA (crRNA). Functions as a ssRNA-specific endoribonuclease. Involved in the integration of spacer DNA into the CRISPR cassette. This chain is CRISPR-associated endoribonuclease Cas2, found in Korarchaeum cryptofilum (strain OPF8).